A 398-amino-acid polypeptide reads, in one-letter code: DNA replication and repair protein RecF (398 aa).

30–37 lines the ATP pocket; sequence GRNGFGKT.

Belongs to the RecF family.

The protein localises to the cytoplasm. Its function is as follows. The RecF protein is involved in DNA metabolism; it is required for DNA replication and normal SOS inducibility. RecF binds preferentially to single-stranded, linear DNA. It also seems to bind ATP. This is DNA replication and repair protein RecF from Corynebacterium efficiens (strain DSM 44549 / YS-314 / AJ 12310 / JCM 11189 / NBRC 100395).